Reading from the N-terminus, the 161-residue chain is Nucleotide-binding protein Mmwyl1_2033 (161 aa).

It belongs to the YajQ family.

Nucleotide-binding protein. In Marinomonas sp. (strain MWYL1), this protein is Nucleotide-binding protein Mmwyl1_2033.